The chain runs to 178 residues: SCAN domain-containing protein 1 (178 aa).

The disordered stretch occupies residues M1–R107. Over residues A9–S18 the composition is skewed to low complexity. Residues G36 to A54 are compositionally biased toward polar residues. The 72-residue stretch at R107–G178 folds into the SCAN box domain.

Interacts with ZNF202.

The protein resides in the nucleus. Functionally, may regulate transcriptional activity. The polypeptide is SCAN domain-containing protein 1 (SCAND1) (Bos taurus (Bovine)).